A 237-amino-acid polypeptide reads, in one-letter code: Ribosomal RNA small subunit methyltransferase G (237 aa).

S-adenosyl-L-methionine-binding positions include glycine 78, phenylalanine 83, 129-130 (AE), and arginine 148.

Belongs to the methyltransferase superfamily. RNA methyltransferase RsmG family.

The protein resides in the cytoplasm. Its function is as follows. Specifically methylates the N7 position of a guanine in 16S rRNA. This Streptococcus equi subsp. equi (strain 4047) protein is Ribosomal RNA small subunit methyltransferase G.